The sequence spans 110 residues: Chorion class B protein M2410 (110 aa).

Repeat copies occupy residues 1-4 (YGGL), 5-9 (GYGGL), 10-14 (GYGGL), and 15-19 (GYGGL). The segment at 1–19 (YGGLGYGGLGYGGLGYGGL) is 4 X 5 AA tandem repeats of G-Y-G-G-L. A left arm region spans residues 1 to 27 (YGGLGYGGLGYGGLGYGGLGGGCGRGF). The segment at 28 to 96 (SGGGLPVATA…GNGDVGITRE (69 aa)) is central domain. The tract at residues 97–110 (GGLGYGAGYGGGYG) is right arm (Gly-rich tandem repeats).

Belongs to the chorion protein family.

Functionally, this protein is one of many from the eggshell of the silk moth. The polypeptide is Chorion class B protein M2410 (Bombyx mori (Silk moth)).